The sequence spans 1286 residues: X-linked retinitis pigmentosa GTPase regulator-interacting protein 1 (1286 aa).

The segment at 144–193 is disordered; sequence QVGHRQLHTAGAPVPEKPKRGPRDRLSYTAPPSFKEHATNENRGEVASKP. Composition is skewed to basic and acidic residues over residues 159 to 169 and 177 to 189; these read EKPKRGPRDRL and FKEH…RGEV. Residues 294-584 are a coiled coil; that stretch reads KAQLTEVQEA…LEGILRSHDL (291 aa). Residues 781–906 enclose the C2 domain; the sequence is GGRKAQEEEF…AKNESIKGDF (126 aa). Disordered regions lie at residues 934–1008 and 1058–1108; these read SFLK…RKHG and EEEE…PMSQ. Composition is skewed to basic and acidic residues over residues 940–960, 988–998, and 1070–1084; these read AQTK…EEKA, HGGERKEKEHQ, and KQKE…KESS. Over residues 1085-1096 the composition is skewed to polar residues; it reads EQGSEVSEAQTT. Residues 1091–1281 form an interaction with RPGR region; the sequence is SEAQTTDSDD…VLHAIYKEMT (191 aa).

It belongs to the RPGRIP1 family. In terms of assembly, forms homodimers and elongated homopolymers. Interacts with RPGR. Interacts with NPHP4. Interacts with NEK4. Interacts with SPATA7. Interacts with CEP290/NPHP6; mediating the association between RPGR and CEP290/NPHP6. As to expression, strong expression in retina, with weaker expression in testis. Expressed in other neurons such as amacrine cells. Colocalizes with RGPR in the outer segment of rod photoreceptors and cone outer segments.

The protein resides in the cell projection. It localises to the cilium. Functionally, may function as scaffolding protein. Required for normal location of RPGR at the connecting cilium of photoreceptor cells. Required for normal disk morphogenesis and disk organization in the outer segment of photoreceptor cells and for survival of photoreceptor cells. In Homo sapiens (Human), this protein is X-linked retinitis pigmentosa GTPase regulator-interacting protein 1 (RPGRIP1).